A 419-amino-acid polypeptide reads, in one-letter code: Probable pectate lyase C (419 aa).

An N-terminal signal peptide occupies residues 1–19 (MRLTPSLISCLSLLHFTSA). N48, N164, and N201 each carry an N-linked (GlcNAc...) asparagine glycan. The active site involves R204. The EF-hand domain maps to 261 to 296 (NENFHAYVETNYYDSDKDGTLNGSELGVDSTNYGGM). Ca(2+) contacts are provided by D274, D276, D278, and T280. N-linked (GlcNAc...) asparagine glycosylation occurs at N282. E285 is a Ca(2+) binding site. Positions 352–395 (ISDEADMGGAGDLDQGTTPTDTDGDGIPDDAEAELGTDPNTADS) are disordered. The span at 363–372 (DLDQGTTPTD) shows a compositional bias: low complexity. Over residues 373–386 (TDGDGIPDDAEAEL) the composition is skewed to acidic residues.

The protein belongs to the polysaccharide lyase 1 family. Ca(2+) is required as a cofactor.

Its subcellular location is the secreted. It catalyses the reaction Eliminative cleavage of (1-&gt;4)-alpha-D-galacturonan to give oligosaccharides with 4-deoxy-alpha-D-galact-4-enuronosyl groups at their non-reducing ends.. Pectinolytic enzyme consist of four classes of enzymes: pectin lyase, polygalacturonase, pectin methylesterase and rhamnogalacturonase. Among pectinolytic enzymes, pectin lyase is the most important in depolymerization of pectin, since it cleaves internal glycosidic bonds of highly methylated pectins. Favors pectate, the anion, over pectin, the methyl ester. The polypeptide is Probable pectate lyase C (plyC) (Aspergillus oryzae (strain ATCC 42149 / RIB 40) (Yellow koji mold)).